A 101-amino-acid chain; its full sequence is Putative pterin-4-alpha-carbinolamine dehydratase (101 aa).

Belongs to the pterin-4-alpha-carbinolamine dehydratase family.

The catalysed reaction is (4aS,6R)-4a-hydroxy-L-erythro-5,6,7,8-tetrahydrobiopterin = (6R)-L-erythro-6,7-dihydrobiopterin + H2O. This chain is Putative pterin-4-alpha-carbinolamine dehydratase, found in Rhizobium leguminosarum bv. trifolii (strain WSM2304).